We begin with the raw amino-acid sequence, 857 residues long: Gelation factor (857 aa).

At methionine 1 the chain carries Blocked amino end (Met). The tract at residues 1-250 is actin-binding; it reads MAAAPSGKTW…EKKRRETSDA (250 aa). 2 consecutive Calponin-homology (CH) domains span residues 12–117 and 125–227; these read DVQK…LRYQ and NSPK…DYAL. The regulatory site stretch occupies residues 229 to 246; it reads KEKRDADALAALEKKRRE. 6 Filamin repeats span residues 245 to 346, 347 to 446, 447 to 545, 546 to 645, 646 to 747, and 763 to 837; these read RETS…NVKI, DGSD…EVKI, LNSD…SIHI, KPAA…TVTV, KPAP…DVKC, and FTVA…KQVL. The disordered stretch occupies residues 832–857; that stretch reads PFKQVLGNPGKKNPEVKSFTTTRTAN.

Homodimer.

In terms of biological role, F-actin cross-linking protein. The sequence is that of Gelation factor (abpC) from Dictyostelium discoideum (Social amoeba).